A 396-amino-acid chain; its full sequence is S-adenosylmethionine synthase (396 aa).

An ATP-binding site is contributed by His-16. Asp-18 is a binding site for Mg(2+). Glu-44 lines the K(+) pocket. Residues Glu-57 and Gln-100 each coordinate L-methionine. The tract at residues 100 to 110 is flexible loop; sequence QSVDIAQGVDR. Residues 165–167, Asp-240, 246–247, Ala-263, and Lys-267 contribute to the ATP site; these read DAK and RK. L-methionine is bound at residue Asp-240. Lys-271 contacts L-methionine.

The protein belongs to the AdoMet synthase family. Homotetramer; dimer of dimers. It depends on Mg(2+) as a cofactor. Requires K(+) as cofactor.

It localises to the cytoplasm. It catalyses the reaction L-methionine + ATP + H2O = S-adenosyl-L-methionine + phosphate + diphosphate. Its pathway is amino-acid biosynthesis; S-adenosyl-L-methionine biosynthesis; S-adenosyl-L-methionine from L-methionine: step 1/1. Its function is as follows. Catalyzes the formation of S-adenosylmethionine (AdoMet) from methionine and ATP. The overall synthetic reaction is composed of two sequential steps, AdoMet formation and the subsequent tripolyphosphate hydrolysis which occurs prior to release of AdoMet from the enzyme. The chain is S-adenosylmethionine synthase from Pseudomonas syringae pv. tomato (strain ATCC BAA-871 / DC3000).